A 1374-amino-acid chain; its full sequence is F-actin-uncapping protein LRRC16A (1374 aa).

At Met1 the chain carries N-acetylmethionine. At Ser122 the chain carries Phosphoserine. 10 LRR repeats span residues 245–269 (SNRLEELVLENAGLRIDFAQKLAGA), 275–298 (NSGLHTINLAGNSLEDRGVSSLSI), 304–327 (PKGLKHLNLSKTSLSPKGVNSLCQ), 336–363 (ASTLTHLDLSGNALRGDDLSHMYNFLAQ), 391–418 (LQCLAVLNLSRSVFSHRKGKEVPPSFKQ), 423–447 (SLALIQINLSGTKLSPEPLKALLLG), 485–510 (IHNITSLDISDNGLESDLSTLIVWLS), 547–570 (DSPLQSLSLADSKLKAEVTIIINA), 574–597 (NTSLTKVDISGNGMGDMGAKMLAK), and 658–682 (LQKIENYLLRNHETRKYLQEQAYRL). The stretch at 714-738 (GDAIQEDLKAAERLMRDAKNSKTLL) forms a coiled coil. A Phosphothreonine modification is found at Thr920. 2 disordered regions span residues 961–982 (PFPSVRQEKRSSGLISELPSEE) and 1040–1374 (KMDC…FIFV). Residues 962–985 (FPSVRQEKRSSGLISELPSEEGRR) form an LRR 11 repeat. The tract at residues 962-1084 (FPSVRQEKRS…LIKSRSRSER (123 aa)) is inhibits capping activity of CP. A Phosphoserine modification is found at Ser972. A compositionally biased stretch (basic and acidic residues) spans 1040 to 1064 (KMDCKRSSSRSSDAHELGEGDEKKK). The necessary for localization at the cell membrane stretch occupies residues 1058–1092 (EGDEKKKRDSRRSGFLNLIKSRSRSERPPTVLMTE). Ser1096 carries the phosphoserine modification. Composition is skewed to basic and acidic residues over residues 1108–1132 (TTRKEIKAAEHNGAPDRTEEIKTPE) and 1141–1150 (EAGRAERSDS). Residues 1191-1204 (VISQDPSSPVSCNT) show a composition bias toward polar residues. Thr1229 carries the phosphothreonine modification. Basic and acidic residues predominate over residues 1232–1244 (KNAKAEPRVDGGC). Residues 1245-1263 (RSRSSSSMPTSPKPLLQSP) are compositionally biased toward low complexity. A phosphoserine mark is found at Ser1281, Ser1289, Ser1291, Ser1295, Ser1319, Ser1328, and Ser1335. Positions 1317–1330 (QNSSQSSPRSFSQE) are enriched in low complexity. The segment covering 1343–1356 (QEQKQRSSGKDGHQ) has biased composition (basic and acidic residues). Ser1363 carries the phosphoserine modification.

This sequence belongs to the CARMIL family. In terms of assembly, homodimer. Interacts (via C-terminus) with heterodimeric capping protein (CP); this interaction uncaps barbed ends capped by CP, enhances barbed-end actin polymerization and promotes lamellipodial formation and cell migration. Interacts with MYO1E. Interacts with TRIO.

It localises to the cytoplasm. The protein localises to the cytoskeleton. Its subcellular location is the cell membrane. It is found in the cell projection. The protein resides in the lamellipodium. Functionally, cell membrane-cytoskeleton-associated protein that plays a role in the regulation of actin polymerization at the barbed end of actin filaments. Prevents F-actin heterodimeric capping protein (CP) activity at the leading edges of migrating cells, and hence generates uncapped barbed ends and enhances actin polymerization, however, seems unable to nucleate filaments. Plays a role in lamellipodial protrusion formations and cell migration. In Mus musculus (Mouse), this protein is F-actin-uncapping protein LRRC16A.